Here is a 121-residue protein sequence, read N- to C-terminus: Small ribosomal subunit protein uS13 (121 aa).

The interval 96-121 is disordered; it reads PVRGQNTKNNARTRKGKAVAIAGKKK. Positions 106-121 are enriched in basic residues; it reads ARTRKGKAVAIAGKKK.

The protein belongs to the universal ribosomal protein uS13 family. In terms of assembly, part of the 30S ribosomal subunit. Forms a loose heterodimer with protein S19. Forms two bridges to the 50S subunit in the 70S ribosome.

Functionally, located at the top of the head of the 30S subunit, it contacts several helices of the 16S rRNA. In the 70S ribosome it contacts the 23S rRNA (bridge B1a) and protein L5 of the 50S subunit (bridge B1b), connecting the 2 subunits; these bridges are implicated in subunit movement. Contacts the tRNAs in the A and P-sites. In Streptococcus gordonii (strain Challis / ATCC 35105 / BCRC 15272 / CH1 / DL1 / V288), this protein is Small ribosomal subunit protein uS13.